A 108-amino-acid chain; its full sequence is Small ribosomal subunit protein eS25 (108 aa).

The disordered stretch occupies residues 1-36 (MAPKKAQAPPPSSKPAKSGGGKQKKKKWSKGKQKEK). The span at 22–31 (KQKKKKWSKG) shows a compositional bias: basic residues.

It belongs to the eukaryotic ribosomal protein eS25 family.

In Solanum lycopersicum (Tomato), this protein is Small ribosomal subunit protein eS25 (RPS25).